We begin with the raw amino-acid sequence, 90 residues long: Progonadoliberin-3 (90 aa).

The N-terminal stretch at 1 to 23 (MEANSRVMVRVLLLALVVQVTLS) is a signal peptide. Gln-24 is modified (pyrrolidone carboxylic acid). A Glycine amide modification is found at Gly-33. Residues 56-90 (LPEEASAQTQERLRPYNVINDDSSHFDRKKRSPNK) form a disordered region.

The protein belongs to the GnRH family.

The protein localises to the secreted. Stimulates the secretion of gonadotropins. This Dicentrarchus labrax (European seabass) protein is Progonadoliberin-3 (gnrh3).